The chain runs to 607 residues: MSVMAATAVVSPQAEASESWYLALLGFAEHFRTSSPPKIRLCVHCLQAVFQFKPPQRIEARTHLQLGSVLYHHTKNSELARQHLEKAWFISQQIPQFEDVKFEAASLLSELYCQENSVDAAKPLLRKAIQISQQTPYWHCRLLFQLAQLHTLEKDLVSACDLLGVGAEYARVVGSEYTRALFLLSKGMLLLMERKLQEVHPLLTLCGQIVENWQGNPIQKESLRVFFLVLQVTHYLDAGQVKSVKPCLKQLQQCIQTISTLHDDEILPSNPADLFHWLPKEHMCVLVYLVTVMHSMQAGYLEKAQKYTDKALMQLEKLKMLDSSPILSSFQVILLEHIIMCRLVTGHKATALQEISQLCQLCQQSPRLFSNHAAQLHTLLGLYCISVNCMDNAEAQFTTALRLTTHQELWTFIVTNLASVYIREGNRHQELYALLERINPDHNFPVSSHCLRAAAFYIRGLFSFFQGRYNEAKRFLRETLKMSNAEDLNRLTACSLVLLGHIFYVLGNHRESNNMVVPAMQLASKIPDMSVQLWSSALLRDLNKACGNNIDAHEAAQMHQNFSQQLLQDHIEACSLPEHNLITWTDGSPPVQFQAQNGPTTSLASLL.

TPR repeat units lie at residues 102 to 135 (FEAA…SQQT), 374 to 407 (AQLH…TTHQ), 453 to 486 (AAAF…SNAE), and 493 to 526 (ACSL…ASKI).

It belongs to the SCC4/mau-2 family. In terms of assembly, interacts with one or more paralogs of nipbl to form the cohesin loading complex.

The protein resides in the nucleus. It localises to the nucleoplasm. In terms of biological role, plays an important role in the loading of the cohesin complex on to DNA. Plays a role in sister chromatid cohesion and normal progression through prometaphase. This chain is MAU2 chromatid cohesion factor homolog (mau2), found in Xenopus laevis (African clawed frog).